Here is a 417-residue protein sequence, read N- to C-terminus: Serine hydroxymethyltransferase 1 (417 aa).

Residues leucine 121 and 125-127 (GHL) contribute to the (6S)-5,6,7,8-tetrahydrofolate site. Lysine 229 is modified (N6-(pyridoxal phosphate)lysine). 355–357 (SPF) contributes to the (6S)-5,6,7,8-tetrahydrofolate binding site.

The protein belongs to the SHMT family. As to quaternary structure, homodimer. It depends on pyridoxal 5'-phosphate as a cofactor.

It localises to the cytoplasm. It catalyses the reaction (6R)-5,10-methylene-5,6,7,8-tetrahydrofolate + glycine + H2O = (6S)-5,6,7,8-tetrahydrofolate + L-serine. Its pathway is one-carbon metabolism; tetrahydrofolate interconversion. It functions in the pathway amino-acid biosynthesis; glycine biosynthesis; glycine from L-serine: step 1/1. Its function is as follows. Catalyzes the reversible interconversion of serine and glycine with tetrahydrofolate (THF) serving as the one-carbon carrier. This reaction serves as the major source of one-carbon groups required for the biosynthesis of purines, thymidylate, methionine, and other important biomolecules. Also exhibits THF-independent aldolase activity toward beta-hydroxyamino acids, producing glycine and aldehydes, via a retro-aldol mechanism. The chain is Serine hydroxymethyltransferase 1 from Pectobacterium atrosepticum (strain SCRI 1043 / ATCC BAA-672) (Erwinia carotovora subsp. atroseptica).